The primary structure comprises 66 residues: MPKQKTHRASAKRFKRTGSGGLKRFRAFTSHRFHGKTKKQRRHLRKASMVHPGDFKRIKSMVSQMR.

Positions 1–16 are enriched in basic residues; the sequence is MPKQKTHRASAKRFKR. Residues 1–20 are disordered; sequence MPKQKTHRASAKRFKRTGSG.

Belongs to the bacterial ribosomal protein bL35 family.

In Streptococcus thermophilus (strain CNRZ 1066), this protein is Large ribosomal subunit protein bL35.